A 43-amino-acid polypeptide reads, in one-letter code: Protein PsbN (43 aa).

A helical membrane pass occupies residues 5 to 25; it reads LILSIFIFSLLLGITSYSIYI.

It belongs to the PsbN family.

The protein resides in the plastid. It localises to the chloroplast thylakoid membrane. Its function is as follows. May play a role in photosystem I and II biogenesis. This chain is Protein PsbN, found in Cyanidium caldarium (Red alga).